Consider the following 248-residue polypeptide: Probable transcriptional regulatory protein Acid_5948 (248 aa).

Belongs to the TACO1 family.

It is found in the cytoplasm. The sequence is that of Probable transcriptional regulatory protein Acid_5948 from Solibacter usitatus (strain Ellin6076).